The following is a 198-amino-acid chain: Nucleoid occlusion factor SlmA (198 aa).

An HTH tetR-type domain is found at Asn-10–Leu-70. The H-T-H motif DNA-binding region spans Thr-33–Phe-52. The stretch at Glu-117 to Arg-144 forms a coiled coil.

It belongs to the nucleoid occlusion factor SlmA family. Homodimer. Interacts with FtsZ.

Its subcellular location is the cytoplasm. It localises to the nucleoid. Its function is as follows. Required for nucleoid occlusion (NO) phenomenon, which prevents Z-ring formation and cell division over the nucleoid. Acts as a DNA-associated cell division inhibitor that binds simultaneously chromosomal DNA and FtsZ, and disrupts the assembly of FtsZ polymers. SlmA-DNA-binding sequences (SBS) are dispersed on non-Ter regions of the chromosome, preventing FtsZ polymerization at these regions. The protein is Nucleoid occlusion factor SlmA of Escherichia coli (strain 55989 / EAEC).